The primary structure comprises 719 residues: IVVERDPIRTSFEKWAKPGHFSRTLAKGPNTTTWIWNLHADAHDFGSHTNDLEEISRKVFSAHFGQLAIIFIWLSGMYFHGARFSNYEAWLSDPTHIKPSAQVVWPIVGQEILNGDVGGGSRGIQITSGLFQLWRASGITSELQLYCTAIGALIFAALMLFAGWFHYHKAAPKLAWFQDVESMLNHHLAGLLGIGSLSWAGHQVHVSLPINQLLDAGVDPKEIPLPHEFILNRDLLAQLYPSFAEGLTPLFTLNWSEYSEFLTFRGGLNPVTGGLWLTDTAHHHLAIAILFLIAGHMYRTNWGIGHSLKEILEAHKGPFTGEGHKGLYEILTTSWHAQLALNLAMLGSLTIVVAHHMYSMPPYPYLAIDYGTQLSLFTHHMWIGGFLIVGAAAHAAIFMVRDYDPTTQYNNLLDRVLRHRDAIVSHLNWACIFLGFHSFGLYIHNDTMSALGRPQDMFSDTAIQLQPIFAQWVQNTHALAPGSTAPDATASTSVTWGGGDLVAVGGKVALLPIPLGTADFLVHHIHAFTIHVTVLILLKGVLFARSSRLIPDKANLGFRFPCDGPGRGGTCQVSAWDHVFLGLFWMYNAISVVIFHFSWKMQSDVWGSISDQGMVTHITGGNFAQSSITINGWLRDFLWAQASQVIQSYGSSLSAYGLLFLGAHFVWAFSLMFLFSGRGYWQELIESIVWAHNKLEVAPVIQPRALSIVQGRAVGVAHY.

8 helical membrane-spanning segments follow: residues 59-82 (VFSAHFGQLAIIFIWLSGMYFHGA), 145-168 (LYCTAIGALIFAALMLFAGWFHYH), 184-208 (LNHHLAGLLGIGSLSWAGHQVHVSL), 280-298 (TAHHHLAIAILFLIAGHMY), 335-358 (WHAQLALNLAMLGSLTIVVAHHMY), 374-400 (LSLFTHHMWIGGFLIVGAAAHAAIFMV), 422-444 (AIVSHLNWACIFLGFHSFGLYIH), and 520-538 (FLVHHIHAFTIHVTVLILL). [4Fe-4S] cluster-binding residues include Cys562 and Cys571. 2 helical membrane passes run 578-599 (HVFLGLFWMYNAISVVIFHFSW) and 653-675 (LSAYGLLFLGAHFVWAFSLMFLF). Position 664 (His664) interacts with chlorophyll a'. Chlorophyll a-binding residues include Met672 and Tyr680. Trp681 is a binding site for phylloquinone. The chain crosses the membrane as a helical span at residues 713–719 (AVGVAHY).

It belongs to the PsaA/PsaB family. The PsaA/B heterodimer binds the P700 chlorophyll special pair and subsequent electron acceptors. PSI consists of a core antenna complex that captures photons, and an electron transfer chain that converts photonic excitation into a charge separation. The eukaryotic PSI reaction center is composed of at least 11 subunits. P700 is a chlorophyll a/chlorophyll a' dimer, A0 is one or more chlorophyll a, A1 is one or both phylloquinones and FX is a shared 4Fe-4S iron-sulfur center. is required as a cofactor.

The protein localises to the plastid. The protein resides in the chloroplast thylakoid membrane. The enzyme catalyses reduced [plastocyanin] + hnu + oxidized [2Fe-2S]-[ferredoxin] = oxidized [plastocyanin] + reduced [2Fe-2S]-[ferredoxin]. PsaA and PsaB bind P700, the primary electron donor of photosystem I (PSI), as well as the electron acceptors A0, A1 and FX. PSI is a plastocyanin-ferredoxin oxidoreductase, converting photonic excitation into a charge separation, which transfers an electron from the donor P700 chlorophyll pair to the spectroscopically characterized acceptors A0, A1, FX, FA and FB in turn. Oxidized P700 is reduced on the lumenal side of the thylakoid membrane by plastocyanin. This is Photosystem I P700 chlorophyll a apoprotein A1 from Encephalartos lebomboensis (Lebombo cycad).